The chain runs to 416 residues: 3-oxoacyl-[acyl-carrier-protein] synthase 1 (416 aa).

The Ketosynthase family 3 (KS3) domain occupies 11 to 415 (FPSVVVTAVT…GHNVALAFGR (405 aa)). Active-site for beta-ketoacyl synthase activity residues include cysteine 171, histidine 311, and histidine 345. 2 residues coordinate substrate: histidine 311 and histidine 345.

It belongs to the thiolase-like superfamily. Beta-ketoacyl-ACP synthases family.

Its subcellular location is the cytoplasm. It carries out the reaction an ultra-long-chain mono-unsaturated fatty acyl-[ACP] + malonyl-[ACP] + H(+) = a 3-oxo-ultra-long-chain mono-unsaturated fatty acyl-[ACP] + holo-[ACP] + CO2. The protein operates within lipid metabolism; mycolic acid biosynthesis. Its function is as follows. Part of the mycobacterial fatty acid elongation system FAS-II, which is involved in mycolic acid biosynthesis. Catalyzes the elongation of long chain acyl-ACP substrates by the addition of two carbons from malonyl-ACP to an acyl acceptor. Involved in the initial extension of the mycolate chain and forms monounsaturated fatty acids that averaged 40 carbons in length. The polypeptide is 3-oxoacyl-[acyl-carrier-protein] synthase 1 (kasA) (Mycobacterium tuberculosis (strain ATCC 35801 / TMC 107 / Erdman)).